Reading from the N-terminus, the 125-residue chain is 14 kDa phosphohistidine phosphatase (125 aa).

Ala2 is modified (N-acetylalanine). Lys21 lines the substrate pocket. The Proton acceptor role is filled by His53. 94-96 (SMA) lines the substrate pocket.

This sequence belongs to the janus family. As to quaternary structure, monomer. Expressed abundantly in heart and skeletal muscle.

It localises to the cytoplasm. It catalyses the reaction N(pros)-phospho-L-histidyl-[protein] + H2O = L-histidyl-[protein] + phosphate. The enzyme catalyses N(tele)-phospho-L-histidyl-[protein] + H2O = L-histidyl-[protein] + phosphate. Its function is as follows. Exhibits phosphohistidine phosphatase activity. This Homo sapiens (Human) protein is 14 kDa phosphohistidine phosphatase (PHPT1).